Here is a 473-residue protein sequence, read N- to C-terminus: Siroheme synthase (473 aa).

Residues 1–203 (MQYLPIFTKL…GDTQAAEQQL (203 aa)) are precorrin-2 dehydrogenase /sirohydrochlorin ferrochelatase. Residues 22 to 23 (DV) and 43 to 44 (PK) each bind NAD(+). Residue Ser-128 is modified to Phosphoserine. The segment at 215–473 (GEVYVVGAGP…SFAQPLTDVA (259 aa)) is uroporphyrinogen-III C-methyltransferase. Pro-224 contributes to the S-adenosyl-L-methionine binding site. Asp-247 serves as the catalytic Proton acceptor. Lys-269 (proton donor) is an active-site residue. Residues 300–302 (GGD), Ile-305, 330–331 (TA), Met-382, and Gly-411 each bind S-adenosyl-L-methionine.

This sequence in the N-terminal section; belongs to the precorrin-2 dehydrogenase / sirohydrochlorin ferrochelatase family. In the C-terminal section; belongs to the precorrin methyltransferase family.

The enzyme catalyses uroporphyrinogen III + 2 S-adenosyl-L-methionine = precorrin-2 + 2 S-adenosyl-L-homocysteine + H(+). The catalysed reaction is precorrin-2 + NAD(+) = sirohydrochlorin + NADH + 2 H(+). It catalyses the reaction siroheme + 2 H(+) = sirohydrochlorin + Fe(2+). The protein operates within cofactor biosynthesis; adenosylcobalamin biosynthesis; precorrin-2 from uroporphyrinogen III: step 1/1. Its pathway is cofactor biosynthesis; adenosylcobalamin biosynthesis; sirohydrochlorin from precorrin-2: step 1/1. It participates in porphyrin-containing compound metabolism; siroheme biosynthesis; precorrin-2 from uroporphyrinogen III: step 1/1. It functions in the pathway porphyrin-containing compound metabolism; siroheme biosynthesis; siroheme from sirohydrochlorin: step 1/1. The protein operates within porphyrin-containing compound metabolism; siroheme biosynthesis; sirohydrochlorin from precorrin-2: step 1/1. Functionally, multifunctional enzyme that catalyzes the SAM-dependent methylations of uroporphyrinogen III at position C-2 and C-7 to form precorrin-2 via precorrin-1. Then it catalyzes the NAD-dependent ring dehydrogenation of precorrin-2 to yield sirohydrochlorin. Finally, it catalyzes the ferrochelation of sirohydrochlorin to yield siroheme. The chain is Siroheme synthase from Pseudoalteromonas translucida (strain TAC 125).